Here is a 117-residue protein sequence, read N- to C-terminus: Immunoglobulin heavy variable 1-69-2 (117 aa).

A signal peptide spans 1-19 (MDCTWRILLLVAAATGTHA). Residues 20–44 (EVQLVQSGAEVKKPGATVKISCKVS) form a framework-1 region. The Ig-like domain maps to 20 to 117 (EVQLVQSGAE…EDTAVYYCAT (98 aa)). A disulfide bond links Cys41 and Cys115. The tract at residues 45–52 (GYTFTDYY) is complementarity-determining-1. A framework-2 region spans residues 53 to 69 (MHWVQQAPGKGLEWMGL). The segment at 70–77 (VDPEDGET) is complementarity-determining-2. Positions 78–115 (IYAEKFQGRVTITADTSTDTAYMELSSLRSEDTAVYYC) are framework-3. The complementarity-determining-3 stretch occupies residues 116-117 (AT).

As to quaternary structure, immunoglobulins are composed of two identical heavy chains and two identical light chains; disulfide-linked.

The protein resides in the secreted. Its subcellular location is the cell membrane. Functionally, v region of the variable domain of immunoglobulin heavy chains that participates in the antigen recognition. Immunoglobulins, also known as antibodies, are membrane-bound or secreted glycoproteins produced by B lymphocytes. In the recognition phase of humoral immunity, the membrane-bound immunoglobulins serve as receptors which, upon binding of a specific antigen, trigger the clonal expansion and differentiation of B lymphocytes into immunoglobulins-secreting plasma cells. Secreted immunoglobulins mediate the effector phase of humoral immunity, which results in the elimination of bound antigens. The antigen binding site is formed by the variable domain of one heavy chain, together with that of its associated light chain. Thus, each immunoglobulin has two antigen binding sites with remarkable affinity for a particular antigen. The variable domains are assembled by a process called V-(D)-J rearrangement and can then be subjected to somatic hypermutations which, after exposure to antigen and selection, allow affinity maturation for a particular antigen. The polypeptide is Immunoglobulin heavy variable 1-69-2 (Homo sapiens (Human)).